A 327-amino-acid chain; its full sequence is DNA polymerase III subunit delta' (327 aa).

As to quaternary structure, DNA polymerase III contains a core (composed of alpha, epsilon and theta chains) that associates with a tau subunit. This core dimerizes to form the POLIII' complex. PolIII' associates with the gamma complex (composed of gamma, delta, delta', psi and chi chains) and with the beta chain to form the complete DNA polymerase III complex.

It carries out the reaction DNA(n) + a 2'-deoxyribonucleoside 5'-triphosphate = DNA(n+1) + diphosphate. Its function is as follows. DNA polymerase III is a complex, multichain enzyme responsible for most of the replicative synthesis in bacteria. This DNA polymerase also exhibits 3' to 5' exonuclease activity. In Haemophilus influenzae (strain ATCC 51907 / DSM 11121 / KW20 / Rd), this protein is DNA polymerase III subunit delta' (holB).